Consider the following 224-residue polypeptide: Phosphoribosyltransferase domain-containing protein 1 (224 aa).

2 residues coordinate Mg(2+): E140 and D141. GMP-binding positions include 140–148, K172, 193–194, and D200; these read EDIINTGRT and FV. D200 lines the Mg(2+) pocket.

This sequence belongs to the purine/pyrimidine phosphoribosyltransferase family.

The sequence is that of Phosphoribosyltransferase domain-containing protein 1 (prtfdc1) from Xenopus tropicalis (Western clawed frog).